Here is a 430-residue protein sequence, read N- to C-terminus: Probable proton-coupled zinc antiporter SLC30A4 (430 aa).

At 1-113 (MAGPGAWKRL…LLKQRKVKTR (113 aa)) the chain is on the cytoplasmic side. At Ser-36 the chain carries Phosphoserine. Residues 114 to 134 (LTIAAVLYLLFMIGELVGGYM) traverse the membrane as a helical segment. Topologically, residues 135–143 (ANSLAIMTD) are lumenal. Residues 144–164 (ALHMLTDLSAIILTLLALWLS) traverse the membrane as a helical segment. Positions 146 and 150 each coordinate Zn(2+). Residues 165–178 (SKSPTRRFTFGFHR) are Cytoplasmic-facing. The helical transmembrane segment at 179–199 (LEVLSAMISVMLVYVLMGFLL) threads the bilayer. Residues 200 to 216 (YEAVQRTIHMNYEINGD) are Lumenal-facing. Residues 217 to 237 (VMLITAAVGVAVNVIMGFLLN) form a helical membrane-spanning segment. The Cytoplasmic segment spans residues 238-275 (QSGHHHSHAHSHSLPSNSPSMVSSGHNHGQDSLAVRAA). Residues 240 to 265 (GHHHSHAHSHSLPSNSPSMVSSGHNH) form a zinc binding region. The tract at residues 245 to 264 (HAHSHSLPSNSPSMVSSGHN) is disordered. The segment covering 249–263 (HSLPSNSPSMVSSGH) has biased composition (low complexity). The chain crosses the membrane as a helical span at residues 276–296 (FVHALGDLVQSVGVLIAAYII). Residues His-278 and Asp-282 each coordinate Zn(2+). Residues 297-311 (RFKPEYKIADPICTY) are Lumenal-facing. The helical transmembrane segment at 312–332 (IFSLLVAFTTFRIIWDTVVII) threads the bilayer. At 333–430 (LEGVPSHLNV…TCANCHSSST (98 aa)) the chain is on the cytoplasmic side.

This sequence belongs to the cation diffusion facilitator (CDF) transporter (TC 2.A.4) family. SLC30A subfamily. As to quaternary structure, homodimerization could regulate efficiency for zinc transport. Interacts with TMEM163. Widely expressed. Highly expressed in the brain and in mammary epithelial cell lines.

It is found in the endosome membrane. The protein resides in the late endosome membrane. It localises to the lysosome membrane. The catalysed reaction is Zn(2+)(in) + 2 H(+)(out) = Zn(2+)(out) + 2 H(+)(in). In terms of biological role, probable proton-coupled zinc ion antiporter mediating zinc import from cytoplasm potentially into the endocytic compartment. Controls zinc deposition in milk. The chain is Probable proton-coupled zinc antiporter SLC30A4 from Mus musculus (Mouse).